The primary structure comprises 62 residues: Large ribosomal subunit protein uL30 (62 aa).

It belongs to the universal ribosomal protein uL30 family. In terms of assembly, part of the 50S ribosomal subunit.

The chain is Large ribosomal subunit protein uL30 from Prosthecochloris aestuarii (strain DSM 271 / SK 413).